The sequence spans 338 residues: Ferredoxin--NADP reductase (338 aa).

Positions 36, 44, 49, 89, 123, 290, and 331 each coordinate FAD.

This sequence belongs to the ferredoxin--NADP reductase type 2 family. Homodimer. FAD serves as cofactor.

It catalyses the reaction 2 reduced [2Fe-2S]-[ferredoxin] + NADP(+) + H(+) = 2 oxidized [2Fe-2S]-[ferredoxin] + NADPH. This is Ferredoxin--NADP reductase from Anaplasma phagocytophilum (strain HZ).